The following is a 143-amino-acid chain: Nucleoside diphosphate kinase (143 aa).

The ATP site is built by lysine 11, phenylalanine 59, arginine 87, threonine 93, arginine 104, and asparagine 114. Histidine 117 serves as the catalytic Pros-phosphohistidine intermediate.

This sequence belongs to the NDK family. As to quaternary structure, homotetramer. Mg(2+) serves as cofactor.

Its subcellular location is the cytoplasm. The enzyme catalyses a 2'-deoxyribonucleoside 5'-diphosphate + ATP = a 2'-deoxyribonucleoside 5'-triphosphate + ADP. It carries out the reaction a ribonucleoside 5'-diphosphate + ATP = a ribonucleoside 5'-triphosphate + ADP. Major role in the synthesis of nucleoside triphosphates other than ATP. The ATP gamma phosphate is transferred to the NDP beta phosphate via a ping-pong mechanism, using a phosphorylated active-site intermediate. This Azotobacter vinelandii (strain DJ / ATCC BAA-1303) protein is Nucleoside diphosphate kinase.